Consider the following 449-residue polypeptide: tRNA-2-methylthio-N(6)-dimethylallyladenosine synthase (449 aa).

The MTTase N-terminal domain maps to 3–118; it reads KKVFVKTFGC…LPELLAQREA (116 aa). 6 residues coordinate [4Fe-4S] cluster: Cys12, Cys49, Cys81, Cys155, Cys159, and Cys162. Residues 141 to 376 enclose the Radical SAM core domain; it reads RVEGASAFVS…VINANIKSIS (236 aa). Residues 377–440 enclose the TRAM domain; that stretch reads ESRVGTVQRI…AYTLRGEVVT (64 aa).

Belongs to the methylthiotransferase family. MiaB subfamily. Monomer. Requires [4Fe-4S] cluster as cofactor.

Its subcellular location is the cytoplasm. The catalysed reaction is N(6)-dimethylallyladenosine(37) in tRNA + (sulfur carrier)-SH + AH2 + 2 S-adenosyl-L-methionine = 2-methylsulfanyl-N(6)-dimethylallyladenosine(37) in tRNA + (sulfur carrier)-H + 5'-deoxyadenosine + L-methionine + A + S-adenosyl-L-homocysteine + 2 H(+). Catalyzes the methylthiolation of N6-(dimethylallyl)adenosine (i(6)A), leading to the formation of 2-methylthio-N6-(dimethylallyl)adenosine (ms(2)i(6)A) at position 37 in tRNAs that read codons beginning with uridine. The sequence is that of tRNA-2-methylthio-N(6)-dimethylallyladenosine synthase from Paracidovorax citrulli (strain AAC00-1) (Acidovorax citrulli).